The primary structure comprises 74 residues: Transcription attenuation protein MtrB (74 aa).

This sequence belongs to the MtrB family. In terms of assembly, oligomer of 11 identical subunits arranged in doughnut-like structure.

In terms of biological role, required for transcription attenuation control in the Trp operon. This trans-acting factor seems to recognize a 10 bases nucleotide sequence in the Trp leader transcript causing transcription termination. Binds the leader RNA only in presence of L-tryptophan. This Geobacillus sp. (strain WCH70) protein is Transcription attenuation protein MtrB.